Reading from the N-terminus, the 91-residue chain is DNA/RNA-binding protein Alba (91 aa).

Belongs to the histone-like Alba family.

The protein localises to the cytoplasm. The protein resides in the chromosome. In terms of biological role, binds double-stranded DNA tightly but without sequence specificity. Involved in DNA compaction. This Methanoculleus marisnigri (strain ATCC 35101 / DSM 1498 / JR1) protein is DNA/RNA-binding protein Alba.